Consider the following 231-residue polypeptide: MMTTLTARPEAITFDPQQSALIVVDMQNAYATPGGYLDLAGFDVSTTRPVIANIQTAVTAARAAGMLIIWFQNGWDEQYVEAGGPGSPNFHKSNALKTMRKQPQLQGKLLAKGSWDYQLVDELVPQPGDIVLPKPRYSGFFNTPLDSILRSRGIRHLVFTGIATNVCVESTLRDGFFLEYFGVVLEDATHQAGPEFAQKAALFNIETFFGWVSDVETFCDALSPTSFARIA.

The Proton acceptor role is filled by Asp25. Lys134 is an active-site residue. Cys167 (nucleophile) is an active-site residue.

Belongs to the isochorismatase family. RutB subfamily.

The enzyme catalyses (Z)-3-ureidoacrylate + H2O + H(+) = (Z)-3-aminoacrylate + NH4(+) + CO2. It carries out the reaction (Z)-3-ureidoacrylate + H2O = (Z)-3-aminoacrylate + carbamate + H(+). The catalysed reaction is (Z)-2-methylureidoacrylate + H2O + H(+) = (Z)-2-methylaminoacrylate + NH4(+) + CO2. Its function is as follows. Hydrolyzes ureidoacrylate to form aminoacrylate and carbamate. The carbamate hydrolyzes spontaneously, thereby releasing one of the nitrogen atoms of the pyrimidine ring as ammonia and one of its carbon atoms as CO2. This chain is Ureidoacrylate amidohydrolase RutB, found in Escherichia coli O9:H4 (strain HS).